Here is a 386-residue protein sequence, read N- to C-terminus: Methionyl-tRNA formyltransferase, mitochondrial (386 aa).

Belongs to the Fmt family.

It is found in the mitochondrion. It carries out the reaction L-methionyl-tRNA(fMet) + (6R)-10-formyltetrahydrofolate = N-formyl-L-methionyl-tRNA(fMet) + (6S)-5,6,7,8-tetrahydrofolate + H(+). Functionally, methionyl-tRNA formyltransferase that formylates methionyl-tRNA in mitochondria and is crucial for translation initiation. The chain is Methionyl-tRNA formyltransferase, mitochondrial (Mtfmt) from Mus musculus (Mouse).